The chain runs to 74 residues: UPF0346 protein LCA_0996 (74 aa).

This sequence belongs to the UPF0346 family.

This is UPF0346 protein LCA_0996 from Latilactobacillus sakei subsp. sakei (strain 23K) (Lactobacillus sakei subsp. sakei).